A 306-amino-acid polypeptide reads, in one-letter code: MTDKIAVLLGGTSAEREVSLNSGAAVLAGLREGGIDAYPVDPKEVDVTQLKSMGFQKVFIALHGRGGEDGTLQGMLELMGLPYTGSGVMASALSMDKLRSKLLWQGAGLPVAPWVALTRAEFEKGLSDKQLAEISALGLPVIVKPSREGSSVGMSKVVAENALQDALRLAFQHDEEVLIEKWLSGPEFTVAILGEEILPSIRIQPSGTFYDYEAKYLSDETQYFCPAGLEASQEANLQALVLKAWTTLGCKGWGRIDVMLDSDGQFYLLEANTSPGMTSHSLVPMAARQAGMSFSQLVVRILELAD.

Catalysis depends on residues glutamate 15 and serine 150. Residues 101–303 (KLLWQGAGLP…FSQLVVRILE (203 aa)) enclose the ATP-grasp domain. Residue 134 to 189 (ISALGLPVIVKPSREGSSVGMSKVVAENALQDALRLAFQHDEEVLIEKWLSGPEFT) coordinates ATP. Positions 257, 270, and 272 each coordinate Mg(2+). The active site involves serine 281.

It belongs to the D-alanine--D-alanine ligase family. As to quaternary structure, monomer. Mg(2+) serves as cofactor. It depends on Mn(2+) as a cofactor.

The protein localises to the cytoplasm. It carries out the reaction 2 D-alanine + ATP = D-alanyl-D-alanine + ADP + phosphate + H(+). The protein operates within cell wall biogenesis; peptidoglycan biosynthesis. Cell wall formation. The protein is D-alanine--D-alanine ligase B (ddlB) of Escherichia coli (strain K12).